Reading from the N-terminus, the 429-residue chain is Ribosomal RNA small subunit methyltransferase B (429 aa).

Residues C254–K260, D277, D303, and D322 each bind S-adenosyl-L-methionine. C375 serves as the catalytic Nucleophile.

It belongs to the class I-like SAM-binding methyltransferase superfamily. RsmB/NOP family.

Its subcellular location is the cytoplasm. It carries out the reaction cytidine(967) in 16S rRNA + S-adenosyl-L-methionine = 5-methylcytidine(967) in 16S rRNA + S-adenosyl-L-homocysteine + H(+). Its function is as follows. Specifically methylates the cytosine at position 967 (m5C967) of 16S rRNA. In Pectobacterium atrosepticum (strain SCRI 1043 / ATCC BAA-672) (Erwinia carotovora subsp. atroseptica), this protein is Ribosomal RNA small subunit methyltransferase B.